The sequence spans 408 residues: Aminoacylase-1 (408 aa).

Residue histidine 80 coordinates Zn(2+). Residue aspartate 82 is part of the active site. Zn(2+) is bound at residue aspartate 113. Residue glutamate 147 is the Proton acceptor of the active site. Zn(2+)-binding residues include glutamate 148, glutamate 175, and histidine 373.

The protein belongs to the peptidase M20A family. Homodimer. Interacts with SPHK1. It depends on Zn(2+) as a cofactor.

It localises to the cytoplasm. The catalysed reaction is an N-acyl-L-amino acid + H2O = an L-alpha-amino acid + a carboxylate. It catalyses the reaction N-acetyl-L-methionine + H2O = L-methionine + acetate. The enzyme catalyses N-acetyl-L-glutamine + H2O = L-glutamine + acetate. Catalyzes the hydrolysis of N-acetylated amino acids to acetate and free amino acids. This is Aminoacylase-1 (ACY1) from Pongo abelii (Sumatran orangutan).